The sequence spans 129 residues: Prefoldin subunit 6 (129 aa).

Ala-2 bears the N-acetylalanine mark. Position 21 is an N6-acetyllysine (Lys-21). Position 66 is an N6-acetyllysine; alternate (Lys-66). Lys-66 participates in a covalent cross-link: Glycyl lysine isopeptide (Lys-Gly) (interchain with G-Cter in SUMO1); alternate. A Glycyl lysine isopeptide (Lys-Gly) (interchain with G-Cter in SUMO2); alternate cross-link involves residue Lys-66.

The protein belongs to the prefoldin subunit beta family. Heterohexamer of two PFD-alpha type and four PFD-beta type subunits. Component of the PAQosome complex which is responsible for the biogenesis of several protein complexes and which consists of R2TP complex members RUVBL1, RUVBL2, RPAP3 and PIH1D1, URI complex members PFDN2, PFDN6, PDRG1, UXT and URI1 as well as ASDURF, POLR2E and DNAAF10/WDR92.

Functionally, binds specifically to cytosolic chaperonin (c-CPN) and transfers target proteins to it. Binds to nascent polypeptide chain and promotes folding in an environment in which there are many competing pathways for nonnative proteins. The polypeptide is Prefoldin subunit 6 (PFDN6) (Canis lupus familiaris (Dog)).